The following is a 257-amino-acid chain: 14-3-3-like protein GF14-G (257 aa).

Belongs to the 14-3-3 family.

Functionally, is associated with a DNA binding complex that binds to the G box, a well-characterized cis-acting DNA regulatory element found in plant genes. This Oryza sativa subsp. japonica (Rice) protein is 14-3-3-like protein GF14-G (GF14G).